The chain runs to 655 residues: p-hydroxybenzoic acid efflux pump subunit AaeB (655 aa).

11 consecutive transmembrane segments (helical) span residues 13-33, 38-58, 69-89, 93-113, 121-141, 152-172, 370-390, 407-427, 431-451, 459-479, and 482-502; these read FAVK…HFQL, WAVL…GGEP, LRII…ISMI, LLMI…SSLV, WGLS…EPLL, EIVI…PRSI, LFWL…IAVV, FIYG…VIIP, QSML…GIEV, MGAL…TFHF, and FLDS…VILL.

The protein belongs to the aromatic acid exporter ArAE (TC 2.A.85) family.

It is found in the cell inner membrane. Its function is as follows. Forms an efflux pump with AaeA. Could function as a metabolic relief valve, allowing to eliminate certain compounds when they accumulate to high levels in the cell. The polypeptide is p-hydroxybenzoic acid efflux pump subunit AaeB (Salmonella dublin (strain CT_02021853)).